Consider the following 446-residue polypeptide: Probable glycine dehydrogenase (decarboxylating) subunit 1 (446 aa).

Belongs to the GcvP family. N-terminal subunit subfamily. As to quaternary structure, the glycine cleavage system is composed of four proteins: P, T, L and H. In this organism, the P 'protein' is a heterodimer of two subunits.

The enzyme catalyses N(6)-[(R)-lipoyl]-L-lysyl-[glycine-cleavage complex H protein] + glycine + H(+) = N(6)-[(R)-S(8)-aminomethyldihydrolipoyl]-L-lysyl-[glycine-cleavage complex H protein] + CO2. Functionally, the glycine cleavage system catalyzes the degradation of glycine. The P protein binds the alpha-amino group of glycine through its pyridoxal phosphate cofactor; CO(2) is released and the remaining methylamine moiety is then transferred to the lipoamide cofactor of the H protein. The polypeptide is Probable glycine dehydrogenase (decarboxylating) subunit 1 (Coxiella burnetii (strain CbuK_Q154) (Coxiella burnetii (strain Q154))).